A 418-amino-acid chain; its full sequence is MRVAMISMHTSPLQQPGTGDSGGMNVYILSTATELAKQGIEVDIYTRATRPSQGEIVRVAENLRVINIAAGPYEGLSKEELPTQLAAFTGGMLSFTRREKVTYDLIHSHYWLSGQVGWLLRDLWRIPLIHTAHTLAAVKNSYRDDSDTPESEARRICEQQLVDNADVLAVNTQEEMQDLMHHYDADPDRISVVSPGADVELYSPGNDRATERSRRELGIPLHTKVVAFVGRLQPFKGPQVLIKAVAALFDRDPDRNLRVIICGGPSGPNATPDTYRHMAEELGVEKRIRFLDPRPPSELVAVYRAADIVAVPSFNESFGLVAMEAQASGTPVIAARVGGLPIAVAEGETGLLVDGHSPHAWADALATLLDDDETRIRMGEDAVEHARTFSWAATAAQLSSLYNDAIANENVDGETHHG.

Histidine 9 contacts 1D-myo-inositol 3-phosphate. UDP-N-acetyl-alpha-D-glucosamine-binding positions include 15-16 (QP) and glycine 23. Residues 20–25 (DSGGMN), lysine 78, tyrosine 110, threonine 134, and arginine 154 each bind 1D-myo-inositol 3-phosphate. The UDP-N-acetyl-alpha-D-glucosamine site is built by arginine 231, lysine 236, and arginine 294. Positions 303, 304, and 306 each coordinate Mg(2+). Glutamate 316 and glutamate 324 together coordinate UDP-N-acetyl-alpha-D-glucosamine. Threonine 330 lines the Mg(2+) pocket.

This sequence belongs to the glycosyltransferase group 1 family. MshA subfamily. In terms of assembly, homodimer.

The catalysed reaction is 1D-myo-inositol 3-phosphate + UDP-N-acetyl-alpha-D-glucosamine = 1D-myo-inositol 2-acetamido-2-deoxy-alpha-D-glucopyranoside 3-phosphate + UDP + H(+). In terms of biological role, catalyzes the transfer of a N-acetyl-glucosamine moiety to 1D-myo-inositol 3-phosphate to produce 1D-myo-inositol 2-acetamido-2-deoxy-glucopyranoside 3-phosphate in the mycothiol biosynthesis pathway. The chain is D-inositol 3-phosphate glycosyltransferase from Corynebacterium glutamicum (strain R).